The primary structure comprises 147 residues: Large ribosomal subunit protein uL15 (147 aa).

Residues 1 to 57 (MDLSNLSPAPGSTKARKRLGRGPGSGNGTTAGRGNKGHNSRSGGGVRPGFEGGQMPL) are disordered. Composition is skewed to gly residues over residues 21-31 (RGPGSGNGTTA) and 42-52 (SGGGVRPGFEG).

Belongs to the universal ribosomal protein uL15 family. In terms of assembly, part of the 50S ribosomal subunit.

In terms of biological role, binds to the 23S rRNA. This is Large ribosomal subunit protein uL15 from Desulfosudis oleivorans (strain DSM 6200 / JCM 39069 / Hxd3) (Desulfococcus oleovorans).